Here is a 338-residue protein sequence, read N- to C-terminus: MNQEIIRQTPLWAENWPIAYAVVQAVVILLVVVLVAALMSFIERRLLAWWQDRYGPNRVGPGGMFQIVADMLKIMFKEDWTPKFADKLTFRLAPAVAMATAVLSFMVIPVSPALGVADMSIGLLFFMAMAGIAVYAVLFGGWSSNNKYSLLGGLRSAAQTISYEVFLGISLMGVVAIAGSFNLREIVEAQRDVWFIIPQFLGFLIFVVAGVAVTHRHPFDQPEAEQELAEGYHVEYGGMKWGMFFVAEYVNVVLISALIVTLFFGGWLAPFNLEIPFVPPVFWFVIKTAFFVMMFVLARGSLMRPRYDQVMNFGWKICLPLALVNLLVTGAVILMNQA.

The next 8 membrane-spanning stretches (helical) occupy residues 22–42 (VVQA…MSFI), 96–116 (VAMA…ALGV), 121–141 (IGLL…LFGG), 161–181 (ISYE…AGSF), 193–213 (VWFI…GVAV), 249–269 (YVNV…GWLA), 277–297 (FVPP…MFVL), and 315–335 (WKIC…VILM).

This sequence belongs to the complex I subunit 1 family. As to quaternary structure, NDH-1 is composed of 14 different subunits. Subunits NuoA, H, J, K, L, M, N constitute the membrane sector of the complex.

Its subcellular location is the cell inner membrane. It catalyses the reaction a quinone + NADH + 5 H(+)(in) = a quinol + NAD(+) + 4 H(+)(out). In terms of biological role, NDH-1 shuttles electrons from NADH, via FMN and iron-sulfur (Fe-S) centers, to quinones in the respiratory chain. The immediate electron acceptor for the enzyme in this species is believed to be ubiquinone. Couples the redox reaction to proton translocation (for every two electrons transferred, four hydrogen ions are translocated across the cytoplasmic membrane), and thus conserves the redox energy in a proton gradient. This subunit may bind ubiquinone. The sequence is that of NADH-quinone oxidoreductase subunit H from Acinetobacter baumannii (strain ATCC 17978 / DSM 105126 / CIP 53.77 / LMG 1025 / NCDC KC755 / 5377).